The primary structure comprises 288 residues: CUF1-dependent copper transporter 1 (288 aa).

Asparagine 18 is a glycosylation site (N-linked (GlcNAc...) asparagine). Residues 42-62 (MPSSAGATVGVCIGLFILAIF) traverse the membrane as a helical segment. Disordered regions lie at residues 106–125 (PVLF…YNPL) and 154–180 (RESQ…GSGV). Over residues 158–167 (EGSSAPSYAH) the composition is skewed to polar residues. The segment covering 168–177 (SQQGQAQAQG) has biased composition (low complexity). A helical transmembrane segment spans residues 251-271 (LLMLVVMTFNIWWMISVVIGC).

This sequence belongs to the copper transporter (Ctr) (TC 1.A.56) family. SLC31A subfamily. As to quaternary structure, interacts with the copper acquisition factor BIM1.

Its subcellular location is the cell membrane. Functionally, high affinity copper transporter involved in Cu(+) import into the cell upon copper-limitating conditions. Functions with BIM1 and probably also FRE4 and FRE7, where FRE4 and FRE7 metalloreductases liberate the Cu(2+) bound to the BIM1 copper-binding site for subsequent import of Cu(+) into the cell by CTR1, via the reduction of BIM1-bound Cu(2+) to Cu(+) to reduce binding affinity for BIM1 but increase affinity for CTR1. The BIM1-CTR1 pathway for copper uptake plays a key role in colonization in the brain where copper amounts are low and thus in cryptococcal meningitis. This chain is CUF1-dependent copper transporter 1, found in Cryptococcus neoformans var. grubii serotype A (strain H99 / ATCC 208821 / CBS 10515 / FGSC 9487) (Filobasidiella neoformans var. grubii).